We begin with the raw amino-acid sequence, 326 residues long: Transposase InsH for insertion sequence element IS5Y (326 aa).

This sequence belongs to the transposase 11 family.

Involved in the transposition of the insertion sequence IS5. This chain is Transposase InsH for insertion sequence element IS5Y (insH5), found in Escherichia coli (strain K12).